We begin with the raw amino-acid sequence, 114 residues long: U5-lycotoxin-Ls1a (114 aa).

The signal sequence occupies residues 1–20; sequence MKYQILFGVVFLTLLSYCYS. A propeptide spanning residues 21-45 is cleaved from the precursor; the sequence is EIEDEFENFVDEEMVEADDPFSLAR. Intrachain disulfides connect Cys51–Cys66, Cys65–Cys93, and Cys77–Cys91.

The protein belongs to the neurotoxin 19 (CSTX) family. 04 (U1-Lctx) subfamily. As to expression, expressed by the venom gland.

It localises to the secreted. The polypeptide is U5-lycotoxin-Ls1a (Lycosa singoriensis (Wolf spider)).